Consider the following 219-residue polypeptide: GTP-binding protein drn-1 (219 aa).

GTP-binding positions include 37-44 (GAGGVGKS), 56-62 (NENYVPT), 85-89 (DTTGS), 146-149 (NKKD), and 177-178 (AK). The short motif at 59–67 (YVPTIEDTY) is the Effector region element. Cys-216 is subject to Cysteine methyl ester. The S-geranylgeranyl cysteine moiety is linked to residue Cys-216. A propeptide spans 217–219 (HIM) (removed in mature form).

It belongs to the small GTPase superfamily. Di-Ras family. Interacts with epac-1 (via C-terminus). Expressed specifically in neurons including the nerve ring, ventral and dorsal nerve cord motor neurons and tail ganglia.

Its subcellular location is the cell membrane. Displays low GTPase activity and exists predominantly in the GTP-bound form. Together with epac-1, may regulate acetylcholine release at the neuromuscular junctions probably downstream of G-protein gsa-1 and adenylate cyclase acy-1. In Caenorhabditis elegans, this protein is GTP-binding protein drn-1.